Here is a 279-residue protein sequence, read N- to C-terminus: Energy-coupling factor transporter ATP-binding protein EcfA1 (279 aa).

In terms of domain architecture, ABC transporter spans 6–240 (LSIEGVSFRY…GSKLERIGLD (235 aa)). 40–47 (GHNGSGKS) is an ATP binding site.

The protein belongs to the ABC transporter superfamily. Energy-coupling factor EcfA family. Forms a stable energy-coupling factor (ECF) transporter complex composed of 2 membrane-embedded substrate-binding proteins (S component), 2 ATP-binding proteins (A component) and 2 transmembrane proteins (T component).

It is found in the cell membrane. Functionally, ATP-binding (A) component of a common energy-coupling factor (ECF) ABC-transporter complex. Unlike classic ABC transporters this ECF transporter provides the energy necessary to transport a number of different substrates. The polypeptide is Energy-coupling factor transporter ATP-binding protein EcfA1 (Geobacillus kaustophilus (strain HTA426)).